The following is a 149-amino-acid chain: Protein SprT-like (149 aa).

Residues Thr-4 to Leu-143 enclose the SprT-like domain. Position 64 (His-64) interacts with Zn(2+). Residue Glu-65 is part of the active site. His-68 contacts Zn(2+).

It belongs to the SprT family. Zn(2+) is required as a cofactor.

It localises to the cytoplasm. The polypeptide is Protein SprT-like (Streptococcus pneumoniae (strain JJA)).